Reading from the N-terminus, the 501-residue chain is TGF-beta receptor type-1 (501 aa).

The first 29 residues, 1–29, serve as a signal peptide directing secretion; sequence MEAASAALRRCLLLIVLVAAATLLPGAKA. Topologically, residues 30 to 124 are extracellular; it reads LQCFCHLCTK…QSAGLGPVEL (95 aa). 5 cysteine pairs are disulfide-bonded: C32/C50, C34/C37, C44/C67, C82/C94, and C95/C100. Residue N41 is glycosylated (N-linked (GlcNAc...) asparagine). The chain crosses the membrane as a helical span at residues 125-145; sequence AAVIAGPVCFVCIALMLMVYI. The Cytoplasmic segment spans residues 146 to 501; the sequence is CHNRTVIHHR…QLSQQEGIKM (356 aa). At S163 the chain carries Phosphoserine. Residues 173–202 form the GS domain; that stretch reads TTLKDLIYDMTTSGSGSGLPLLVQRTIART. T183 and T184 each carry phosphothreonine; by TGFBR2. 3 positions are modified to phosphoserine; by TGFBR2: S185, S187, and S189. Positions 191–192 match the FKBP1A-binding motif; it reads LP. The 291-residue stretch at 203–493 folds into the Protein kinase domain; it reads IVLQESIGKG…LRIKKTLSQL (291 aa). ATP contacts are provided by residues 209–217 and K230; that span reads IGKGRFGEV. D331 functions as the Proton acceptor in the catalytic mechanism. K389 participates in a covalent cross-link: Glycyl lysine isopeptide (Lys-Gly) (interchain with G-Cter in SUMO).

It belongs to the protein kinase superfamily. TKL Ser/Thr protein kinase family. TGFB receptor subfamily. Homodimer; in the endoplasmic reticulum but also at the cell membrane. Heterohexamer; TGFB1, TGFB2 and TGFB3 homodimeric ligands assemble a functional receptor composed of two TGFBR1 and TGFBR2 heterodimers to form a ligand-receptor heterohexamer. The respective affinity of TGBRB1 and TGFBR2 for the ligands may modulate the kinetics of assembly of the receptor and may explain the different biological activities of TGFB1, TGFB2 and TGFB3. Component of a complex composed of TSC22D1 (via N-terminus), TGFBR1 and TGFBR2; the interaction between TSC22D1 and TGFBR1 is inhibited by SMAD7 and promoted by TGFB1. Interacts with CD109; inhibits TGF-beta receptor activation in keratinocytes. Interacts with RBPMS. Interacts with SMAD2, SMAD3 and ZFYVE9; ZFYVE9 recruits SMAD2 and SMAD3 to the TGF-beta receptor. Interacts with TRAF6 and MAP3K7; induces MAP3K7 activation by TRAF6. Interacts with PARD6A; involved in TGF-beta induced epithelial to mesenchymal transition. Interacts with NEDD4L. Interacts with SMAD7, SMURF1 and SMURF2; SMAD7 recruits NEDD4L, SMURF1 and SMURF2 to the TGF-beta receptor. Interacts with USP15 and VPS39. Interacts (unphosphorylated) with FKBP1A; prevents TGFBR1 phosphorylation by TGFBR2 and stabilizes it in the inactive conformation. Interacts with SDCBP (via C-terminus). Interacts with CAV1 and this interaction is impaired in the presence of SDCBP. Interacts with APPL1; interaction is TGF beta dependent; mediates trafficking of the TGFBR1 from the endosomes to the nucleus via microtubules in a TRAF6-dependent manner. Interacts with GPR50; this interaction promotes the constitutive activation of SMAD signaling pathway. Mg(2+) is required as a cofactor. It depends on Mn(2+) as a cofactor. In terms of processing, phosphorylated at basal levels in the absence of ligand. Activated upon phosphorylation by TGFBR2, mainly in the GS domain. Phosphorylation in the GS domain abrogates FKBP1A-binding. Post-translationally, N-Glycosylated. Ubiquitinated; undergoes ubiquitination catalyzed by several E3 ubiquitin ligases including SMURF1, SMURF2 and NEDD4L2. Results in the proteasomal and/or lysosomal degradation of the receptor thereby negatively regulating its activity. Deubiquitinated by USP15, leading to stabilization of the protein and enhanced TGF-beta signal. Its ubiquitination and proteasome-mediated degradation is negatively regulated by SDCBP. Urogenital ridge, testis, ovary, brain and lungs.

The protein resides in the cell membrane. The protein localises to the cell junction. It localises to the tight junction. Its subcellular location is the membrane raft. It is found in the cell surface. The catalysed reaction is L-threonyl-[receptor-protein] + ATP = O-phospho-L-threonyl-[receptor-protein] + ADP + H(+). It catalyses the reaction L-seryl-[receptor-protein] + ATP = O-phospho-L-seryl-[receptor-protein] + ADP + H(+). Kept in an inactive conformation by FKBP1A preventing receptor activation in absence of ligand. CD109 is another inhibitor of the receptor. Transmembrane serine/threonine kinase forming with the TGF-beta type II serine/threonine kinase receptor, TGFBR2, the non-promiscuous receptor for the TGF-beta cytokines TGFB1, TGFB2 and TGFB3. Transduces the TGFB1, TGFB2 and TGFB3 signal from the cell surface to the cytoplasm and is thus regulating a plethora of physiological and pathological processes including cell cycle arrest in epithelial and hematopoietic cells, control of mesenchymal cell proliferation and differentiation, wound healing, extracellular matrix production, immunosuppression and carcinogenesis. The formation of the receptor complex composed of 2 TGFBR1 and 2 TGFBR2 molecules symmetrically bound to the cytokine dimer results in the phosphorylation and the activation of TGFBR1 by the constitutively active TGFBR2. Activated TGFBR1 phosphorylates SMAD2 which dissociates from the receptor and interacts with SMAD4. The SMAD2-SMAD4 complex is subsequently translocated to the nucleus where it modulates the transcription of the TGF-beta-regulated genes. This constitutes the canonical SMAD-dependent TGF-beta signaling cascade. Also involved in non-canonical, SMAD-independent TGF-beta signaling pathways. For instance, TGFBR1 induces TRAF6 autoubiquitination which in turn results in MAP3K7 ubiquitination and activation to trigger apoptosis. Also regulates epithelial to mesenchymal transition through a SMAD-independent signaling pathway through PARD6A phosphorylation and activation. The polypeptide is TGF-beta receptor type-1 (Tgfbr1) (Rattus norvegicus (Rat)).